Reading from the N-terminus, the 109-residue chain is Large ribosomal subunit protein uL24 (109 aa).

The protein belongs to the universal ribosomal protein uL24 family. As to quaternary structure, part of the 50S ribosomal subunit.

In terms of biological role, one of two assembly initiator proteins, it binds directly to the 5'-end of the 23S rRNA, where it nucleates assembly of the 50S subunit. Its function is as follows. One of the proteins that surrounds the polypeptide exit tunnel on the outside of the subunit. The sequence is that of Large ribosomal subunit protein uL24 from Syntrophobacter fumaroxidans (strain DSM 10017 / MPOB).